The following is a 197-amino-acid chain: Protein Hikeshi (197 aa).

Positions 18–55 (VAEDKFVFDLPDYENINHVVVFMLGTIPFPEGMGGSVY) are required for F-X-F-G repeats-nucleoporins recognition and nuclear import. Residues 124 to 134 (QTPVGSAAVSS) are flexible linker region involved in nuclear import of HSP70 proteins.

This sequence belongs to the OPI10 family. Forms an asymmetric homodimer; required for binding and nuclear import of HSP70 proteins. Interacts with ATP-bound HSP70 proteins. Interacts with NUP62 and NUP153 (via F-X-F-G repeats). Interacts with HSPA8. As to expression, expressed in the central white matter of newborn and adult brain, particularly in regions where oligodendrocytes are generated.

It localises to the cytoplasm. It is found in the cytosol. The protein localises to the nucleus. Functionally, acts as a specific nuclear import carrier for HSP70 proteins following heat-shock stress: acts by mediating the nucleoporin-dependent translocation of ATP-bound HSP70 proteins into the nucleus. HSP70 proteins import is required to protect cells from heat shock damages. Does not translocate ADP-bound HSP70 proteins into the nucleus. May also be indirectly required for organization and/or function of the secretory apparatus in Club cells in lung. The polypeptide is Protein Hikeshi (Mus musculus (Mouse)).